A 121-amino-acid polypeptide reads, in one-letter code: MSNEVDRMDVDEDESQNIAQSSNQSAPVETKKKRFEIKKWTAVAFWSWDIAVDNCAICRNHIMEPCIECQPKAMTDTDNECVAAWGVCNHAFHLHCINKWIKTRDACPLDNQPWQLARCGR.

Positions methionine 1 to lysine 31 are disordered. Residue serine 15 is modified to Phosphoserine. A compositionally biased stretch (low complexity) spans glutamine 16–alanine 26. Zn(2+) is bound by residues cysteine 55, cysteine 58, cysteine 66, cysteine 69, cysteine 81, cysteine 88, histidine 90, histidine 93, histidine 95, cysteine 107, and aspartate 110. An RING-type zinc finger spans residues cysteine 55–asparagine 111.

Belongs to the RING-box family. As to quaternary structure, component of multiple cullin-RING ligases (CRLs) composed of 4 subunits: the RING protein HRT1, a cullin, a linker protein, and one of many alternative substrate receptors. Component of SCF E3 ubiquitin ligase complexes containing the cullin CDC53, the linker protein SKP1/CBF3D, and substrate receptors containing F-box motifs like DAS1 or GRR1. Component of RTT101(MMS1) E3 ubiquitin ligase complexes containing the cullin RTT101, the linker protein MMS1, and substrate receptors belonging to a protein family described as DCAF (DDB1- and CUL4-associated factor) like MMS22. Component of CRL3 E3 ubiquitin ligase complexes containing the cullin CUL3, the linker protein ELC1, and substrate receptors containing SOCS-box motifs like ELA1. Interacts with CDC53, CUL3, RTT101, CDC4 and CDC34/UBC3.

Its subcellular location is the cytoplasm. It localises to the nucleus. The protein operates within protein modification; protein ubiquitination. Functionally, core component of multiple cullin-RING-based E3 ubiquitin-protein ligase complexes (CRLs), which mediate the ubiquitination of target proteins. Recruits the E2 ubiquitin-conjugating enzyme CDC34/UBC3 to the complex and brings it into close proximity to the substrate. Also stimulates CDC34/UBC3 autoubiquitination and promotes the neddylation of CDC53 and RTT101. Component of the SCF(CDC4) ubiquitin ligase required for ubiquitination of the cyclin-dependent kinase inhibitor SIC1 and for the G1-to-S phase transition. Component of the RTT101(MMS1-MMS22) ubiquitin ligase that promotes fork progression through damaged DNA or natural pause sites. Component of the CRL3(ELA1) ubiquitin ligase required for ubiquitination of RPB1, the largest subunit of RNA polymerase II (Pol II), which targets Pol II for proteasomal degradation in DNA-damaged cells. This chain is RING-box protein HRT1 (HRT1), found in Saccharomyces cerevisiae (strain ATCC 204508 / S288c) (Baker's yeast).